The primary structure comprises 66 residues: Protein I177L (66 aa).

Belongs to the asfivirus I177L family.

The protein resides in the virion. This African swine fever virus (isolate Tick/Malawi/Lil 20-1/1983) (ASFV) protein is Protein I177L.